The sequence spans 1203 residues: Potassium/sodium hyperpolarization-activated cyclic nucleotide-gated channel 4 (1203 aa).

Residues Met-1–Pro-182 form a disordered region. Residues Met-1–Phe-263 are Cytoplasmic-facing. Residues Met-26 to Gly-36 are compositionally biased toward acidic residues. The span at Ser-105–Ser-117 shows a compositional bias: gly residues. Over residues His-121–Ala-133 the composition is skewed to basic and acidic residues. The residue at position 138 (Ser-138) is a Phosphoserine. The span at Ala-163–Pro-174 shows a compositional bias: pro residues. Residues Gly-209 to Asp-260 are involved in subunit assembly. A helical membrane pass occupies residues Tyr-264–Phe-286. Residues Phe-287 to Thr-293 are Extracellular-facing. The helical transmembrane segment at Pro-294–Phe-314 threads the bilayer. Residues Arg-315–Lys-336 are Cytoplasmic-facing. The chain crosses the membrane as a helical span at residues Tyr-337–Val-359. Over Glu-360–Arg-378 the chain is Extracellular. The chain crosses the membrane as a helical; Voltage-sensor span at residues Phe-379–His-399. The Cytoplasmic segment spans residues Gln-400–Ser-413. A helical membrane pass occupies residues Ala-414–Gln-436. Topologically, residues Phe-437–Gln-464 are extracellular. The N-linked (GlcNAc...) asparagine glycan is linked to Asn-458. Residues Tyr-465–Pro-486 constitute an intramembrane region (pore-forming). Over Val-487–Asp-491 the chain is Extracellular. A helical transmembrane segment spans residues Val-492–Ile-517. Over Gln-518–Leu-1203 the chain is Cytoplasmic. 3',5'-cyclic GMP is bound by residues Tyr-559, Lys-562, Phe-564, and Glu-566. 7 residues coordinate 3',5'-cyclic AMP: Gly-659, Glu-660, Cys-662, Arg-669, Thr-670, Val-673, and Arg-710. 3 disordered regions span residues Ala-836–Ser-856, Gly-870–Ala-897, and Leu-918–Leu-1203. 2 stretches are compositionally biased toward low complexity: residues Leu-918–Pro-941 and Arg-966–Leu-986. Positions Glu-995–Pro-1004 are enriched in pro residues. The segment covering Ser-1005 to Pro-1028 has biased composition (low complexity). Positions Gly-1029–Pro-1042 are enriched in pro residues. The segment covering Ala-1045–Pro-1056 has biased composition (low complexity). Phosphoserine is present on residues Ser-1105 and Ser-1108. Gly residues predominate over residues Ala-1122–Pro-1137.

The protein belongs to the potassium channel HCN family. In terms of assembly, homotetramer. The channel assemble into homotetramers or heteromeric complexes that contains of four pore-forming subunits. Interacts with PEX5L with a 4:4 HCN4:PEX5L stoichiometry; reduces the effects of cAMP on the voltage-dependence and rate of activation. Interacts with IRAG1; regulates HCN4 channel activity. Interacts with IRAG2; regulates HCN4 channel activity. S-palmitoylated. Highly expressed in thalamus, testis and in heart, both in ventricle and atrium. Detected at much lower levels in amygdala, substantia nigra, cerebellum and hippocampus.

The protein resides in the cell membrane. The enzyme catalyses K(+)(in) = K(+)(out). The catalysed reaction is Na(+)(in) = Na(+)(out). With respect to regulation, activated by cAMP and to a lesser extent by cGMP and cCMP. cAMP binding causes a conformation change that leads to the assembly of an active tetramer and channel opening. Binding of cAMP removes a tonic inhibition conferred by cyclic nucleotide-binding domain (CNBD) on channel opening. Cyclic dinucleotides can modulate HCN4 channel; cyclic dinucleotides acting as potent antagonists of cAMP. Inhibited by extracellular Cs(+) ions. Auxiliary subunits can also regulate HCN4 channel. IRAG1 causes a gain-of-function by shifting HCN4 activation to more depolarized membrane potentials in the absence of cAMP. In contrast, IRAG2 causes a loss-of-function by inhibiting cAMP-dependent potentiation of HCN4 activation. Hyperpolarization-activated ion channel that are permeable to Na(+) and K(+) ions with very slow activation and inactivation. Exhibits higher selectivity for K(+) over Na(+) ions. Contributes to the native pacemaker currents in heart (If) that regulate the rhythm of heart beat. Contributes to the native pacemaker currents in neurons (Ih). May mediate responses to sour stimuli. The protein is Potassium/sodium hyperpolarization-activated cyclic nucleotide-gated channel 4 of Homo sapiens (Human).